A 144-amino-acid chain; its full sequence is Small ribosomal subunit protein bS16 (144 aa).

Residues 115–144 (NEPVAEAVTPKKKAKKDDAAAESTEAEAAE) are disordered.

This sequence belongs to the bacterial ribosomal protein bS16 family.

The protein is Small ribosomal subunit protein bS16 of Nocardia farcinica (strain IFM 10152).